A 483-amino-acid polypeptide reads, in one-letter code: Aspartyl/glutamyl-tRNA(Asn/Gln) amidotransferase subunit B (483 aa).

It belongs to the GatB/GatE family. GatB subfamily. Heterotrimer of A, B and C subunits.

It carries out the reaction L-glutamyl-tRNA(Gln) + L-glutamine + ATP + H2O = L-glutaminyl-tRNA(Gln) + L-glutamate + ADP + phosphate + H(+). It catalyses the reaction L-aspartyl-tRNA(Asn) + L-glutamine + ATP + H2O = L-asparaginyl-tRNA(Asn) + L-glutamate + ADP + phosphate + 2 H(+). Its function is as follows. Allows the formation of correctly charged Asn-tRNA(Asn) or Gln-tRNA(Gln) through the transamidation of misacylated Asp-tRNA(Asn) or Glu-tRNA(Gln) in organisms which lack either or both of asparaginyl-tRNA or glutaminyl-tRNA synthetases. The reaction takes place in the presence of glutamine and ATP through an activated phospho-Asp-tRNA(Asn) or phospho-Glu-tRNA(Gln). In Rickettsia felis (strain ATCC VR-1525 / URRWXCal2) (Rickettsia azadi), this protein is Aspartyl/glutamyl-tRNA(Asn/Gln) amidotransferase subunit B.